The primary structure comprises 527 residues: Baeyer-Villiger monooxygenase (527 aa).

Residues Ser36, Glu56, 64–67 (TWRV), Asp76, Tyr82, and Ile125 each bind FAD. 74 to 76 (ACD) is a binding site for NADP(+). Residues 199–205 (TGASAIQ), 222–223 (RT), and 308–309 (KR) contribute to the NADP(+) site. Met415 contributes to the FAD binding site.

This sequence belongs to the FAD-binding monooxygenase family. Requires FAD as cofactor.

In terms of biological role, catalyzes a Baeyer-Villiger oxidation reaction, i.e. the insertion of an oxygen atom into a carbon-carbon bond adjacent to a carbonyl, which converts ketones to esters or lactones using NADPH and/or NADH as an electron donor. Thus, can convert bicyclo[3.2.0]hept-2-en-6-one into the oxidative lactone products 2-oxabicyclo[3.3.0]oct-6-en-3-one and 3-oxabicyclo[3.3.0]oct-6-en-2-one. Is also able to catalyze the sulfoxidation of methyl phenyl sulfide (thioanisole). This chain is Baeyer-Villiger monooxygenase, found in Pseudomonas aeruginosa (strain ATCC 15692 / DSM 22644 / CIP 104116 / JCM 14847 / LMG 12228 / 1C / PRS 101 / PAO1).